The following is a 563-amino-acid chain: 5-aminolevulinate synthase, mitochondrial (563 aa).

The transit peptide at 1-18 (MESLVRQSKKLCPYIGRT) directs the protein to the mitochondrion. Positions 137, 251, and 270 each coordinate substrate. Positions 303, 331, and 373 each coordinate pyridoxal 5'-phosphate. Lysine 376 is a catalytic residue. Lysine 376 bears the N6-(pyridoxal phosphate)lysine mark. Threonine 405 and threonine 406 together coordinate pyridoxal 5'-phosphate. Threonine 491 lines the substrate pocket.

Belongs to the class-II pyridoxal-phosphate-dependent aminotransferase family. In terms of assembly, homodimer. The cofactor is pyridoxal 5'-phosphate.

The protein resides in the mitochondrion matrix. It carries out the reaction succinyl-CoA + glycine + H(+) = 5-aminolevulinate + CO2 + CoA. It functions in the pathway porphyrin-containing compound metabolism; protoporphyrin-IX biosynthesis; 5-aminolevulinate from glycine: step 1/1. Functionally, catalyzes the synthesis of 5-aminolevulinate (ALA) from succinyl-CoA and glycine, the first and rate-limiting step in heme biosynthesis. The polypeptide is 5-aminolevulinate synthase, mitochondrial (HEM1) (Yarrowia lipolytica (strain CLIB 122 / E 150) (Yeast)).